The chain runs to 468 residues: Peroxisome proliferator-activated receptor alpha (468 aa).

Residues 1 to 20 (MVDTESQICPLSPFGDDDLE) form a disordered region. Positions 99 to 173 (NIECRICGDK…DGMSHNAIRF (75 aa)) form a DNA-binding region, nuclear receptor. NR C4-type zinc fingers lie at residues 102–122 (CRIC…CEGC) and 139–161 (CDRS…FQKC). An NR LBD domain is found at 239-466 (FVIHDMETLC…HPLLQEIYRD (228 aa)). The interval 304 to 433 (DQVTLLKYGV…PKLLQKMADL (130 aa)) is required for heterodimerization with RXRA.

It belongs to the nuclear hormone receptor family. NR1 subfamily. As to quaternary structure, heterodimer; with RXRA. This heterodimerization is required for DNA binding and transactivation activity. Interacts with NCOA3 coactivator. Interacts with CITED2; the interaction stimulates its transcriptional activity. Also interacts with PPARBP in vitro. Interacts with AKAP13, LPIN1, PRDM16 and coactivator NCOA6. Interacts with ASXL1 and ASXL2. Interacts with PER2. Interacts with SIRT1; the interaction seems to be modulated by NAD(+) levels. Interacts with CRY1 and CRY2. In hepatocytes, interacts with PAQR3 and HUWE1; the interactions promote PPARA poylubiquitination and HUWE1-mediated degradation. Ubiquitinated by E3 ubiquitin-protein ligase HUWE1; leading to proteasomal degradation. In terms of processing, phosphorylated.

It localises to the nucleus. Its function is as follows. Ligand-activated transcription factor. Key regulator of lipid metabolism. Activated by the endogenous ligand 1-palmitoyl-2-oleoyl-sn-glycerol-3-phosphocholine (16:0/18:1-GPC). Activated by oleylethanolamide, a naturally occurring lipid that regulates satiety. Receptor for peroxisome proliferators such as hypolipidemic drugs and fatty acids. Regulates the peroxisomal beta-oxidation pathway of fatty acids. Functions as a transcription activator for the ACOX1 and P450 genes. Transactivation activity requires heterodimerization with RXRA and is antagonized by NR2C2. May be required for the propagation of clock information to metabolic pathways regulated by PER2. This is Peroxisome proliferator-activated receptor alpha (PPARA) from Phascolarctos cinereus (Koala).